The primary structure comprises 369 residues: 2-aminoethylphosphonate--pyruvate transaminase (369 aa).

The residue at position 193 (K193) is an N6-(pyridoxal phosphate)lysine.

It belongs to the class-V pyridoxal-phosphate-dependent aminotransferase family. PhnW subfamily. As to quaternary structure, homodimer. It depends on pyridoxal 5'-phosphate as a cofactor.

It catalyses the reaction (2-aminoethyl)phosphonate + pyruvate = phosphonoacetaldehyde + L-alanine. Involved in phosphonate degradation. This Burkholderia pseudomallei (strain 1106a) protein is 2-aminoethylphosphonate--pyruvate transaminase.